Consider the following 173-residue polypeptide: MDVTIQHPWFKRALGPFYPSRLLDQFFGEGLFEYDLLPFLSSTISPYYRQSLFRTVLDSGISEVRSDRDKFVIFLDVKHFSPEDLTVKVLEDFVEIHGKHSERQDDHGYISREFHRRYRLPPSVDQAALSCSLSADGMLTFSGPKVASGLDAGPSERAIPVSREEKPSSAPSS.

Methionine 1 is modified (N-acetylmethionine). Residues 1–63 are required for complex formation with BFSP1 and BFSP2; that stretch reads MDVTIQHPWF…RTVLDSGISE (63 aa). Deamidated glutamine; partial is present on glutamine 6. Serine 45 is subject to Phosphoserine. Glutamine 50 is modified (deamidated glutamine; partial). Residues 52–162 form the sHSP domain; the sequence is LFRTVLDSGI…GPSERAIPVS (111 aa). N6-acetyllysine occurs at positions 70 and 99. Zn(2+)-binding residues include histidine 100, glutamate 102, and histidine 107. The tract at residues 145-173 is disordered; sequence KVASGLDAGPSERAIPVSREEKPSSAPSS. Residue serine 162 is glycosylated (O-linked (GlcNAc) serine).

It belongs to the small heat shock protein (HSP20) family. As to quaternary structure, heteromer composed of three CRYAA and one CRYAB subunits. Zinc coordination is achieved at least by His-100, Glu-102 and His-107. His-100 and Glu-102 come from the same molecule within the oligomer, while His-107 residue is provided by another molecule. Inter-subunit bridging via zinc ions enhances stability, which is crucial as there is no protein turn over in the lens. Can also form homodimers and homotetramers (dimers of dimers) which serve as the building blocks of homooligomers. Part of a complex required for lens intermediate filament formation composed of BFSP1, BFSP2 and CRYAA. Acetylation at Lys-70 may increase chaperone activity. Post-translationally, undergoes age-dependent proteolytical cleavage at the C-terminus.

The protein resides in the cytoplasm. It localises to the nucleus. Functionally, contributes to the transparency and refractive index of the lens. Acts as a chaperone, preventing aggregation of various proteins under a wide range of stress conditions. Required for the correct formation of lens intermediate filaments as part of a complex composed of BFSP1, BFSP2 and CRYAA. This Erinaceus europaeus (Western European hedgehog) protein is Alpha-crystallin A chain (CRYAA).